The following is a 699-amino-acid chain: MATAREIPLNRTRNIGIMAHIDAGKTTTTERVLYYTGVSHKMGEVHEGSAVMDWMEQEQERGITITSAATTCYWLGMDQQYPKHRINIIDTPGHVDFTIEVERSLRVLDGAVAVFCSVGGVEPQSETVWRQANRYHVPRLGFVNKMDRAGANFLRVVNQVKDRLNANPIPIQLPIGAEEDFKGVIDLIREKAIYWNEADRGRTYELADIPEDMKAEVQKWREKMIEAAAESSEELMDKYLEAGDLSPEQIRQGLRQRTLANEIVPILCGSAFKNKGVQALLDAVIDYLPSPTDVPAIRGEEDDGSEGSRSASDDEPFAALAFKIASDPFVGTLTFFRVYSGILKSGDSVYNPIKGKKERIGRLLQMHSNSREEIKEVRAGDIAAAVGLKTVTTGDTICNQQNIITLEKMDFPEPVISVAIEPKTKADQEKMGVALGKLAQEDPSFRVHTDEESAQTIIEGMGELHLEIIVDRMRREFNVEANVGKPRVAYRETIRRSVEQQGKYIRQTGGRGQYGDVWLRIEPREPGAGFEFENAIVGGVVPREYIPAVEKGVREQMENGIRAGYPVVDVKVTIFEGSYHDVDSSEMAFKIAGSMAFKEGASKADPVLLEPIMKVEVVTPEEYMGDVVGDLNRRRGMIQGMDESPAGKIVDVEVPLAEMFGYATDLRSLSQGRATYTMEFLKYAEAPSNIAEAIIKQQS.

Residues 10-292 (NRTRNIGIMA…AVIDYLPSPT (283 aa)) enclose the tr-type G domain. Residues 19-26 (AHIDAGKT), 90-94 (DTPGH), and 144-147 (NKMD) each bind GTP. Residues 292–312 (TDVPAIRGEEDDGSEGSRSAS) form a disordered region.

Belongs to the TRAFAC class translation factor GTPase superfamily. Classic translation factor GTPase family. EF-G/EF-2 subfamily.

It localises to the cytoplasm. Its function is as follows. Catalyzes the GTP-dependent ribosomal translocation step during translation elongation. During this step, the ribosome changes from the pre-translocational (PRE) to the post-translocational (POST) state as the newly formed A-site-bound peptidyl-tRNA and P-site-bound deacylated tRNA move to the P and E sites, respectively. Catalyzes the coordinated movement of the two tRNA molecules, the mRNA and conformational changes in the ribosome. This Coxiella burnetii (strain RSA 331 / Henzerling II) protein is Elongation factor G.